We begin with the raw amino-acid sequence, 580 residues long: XK-related protein 7 (580 aa).

Positions 1–22 are enriched in low complexity; the sequence is MAAKSDGAAAVAGPGPEGPAGA. Residues 1–28 are disordered; sequence MAAKSDGAAAVAGPGPEGPAGADRGGAG. Transmembrane regions (helical) follow at residues 59-79, 89-109, 260-280, 303-323, 326-346, 355-375, 384-404, and 415-435; these read WVLCALLVFFSDGATDLWLAA, YFGLTLLFVLLPSLVVQLLSF, LLTALSISASLVSLAWTLASY, VLWHLFTIAARTLAFALFASV, LYFGIFIVAHWCIMTFWVIQG, WEEIIYNMVVGIIYIFCWFNV, VTLYYCIVLLENAALTGFWYS, and LILVCVVASSFALGIFFMCVY. Positions 470 to 516 are disordered; it reads TSPPRSLPRTTGAERDGAAVGGERAGTPTPPVFQVRPGLPPTPVARP.

It belongs to the XK family.

Its subcellular location is the cell membrane. This Rattus norvegicus (Rat) protein is XK-related protein 7.